A 1485-amino-acid polypeptide reads, in one-letter code: Cystic fibrosis transmembrane conductance regulator (1485 aa).

At 1–78 the chain is on the cytoplasmic side; it reads MQKTPLEKAS…KLINALKRCF (78 aa). A helical transmembrane segment spans residues 79-99; it reads FWKFLFYGILLYLGEVTKAVQ. The ABC transmembrane type-1 1 domain occupies 82-366; the sequence is FLFYGILLYL…WAVQTWYDSL (285 aa). Residues 100–123 lie on the Extracellular side of the membrane; sequence PLLLGRIIASYDRDNEHERSIAYY. The helical transmembrane segment at 124–147 threads the bilayer; it reads LAIGLCLLFVVRMLLLHPAIFGLH. Topologically, residues 148–196 are cytoplasmic; that stretch reads HIGMQMRIAMFSLIYKKTLKLSSKVLDKISTGQLVSLLSNNLNKFDEGL. Residues 197–217 form a helical membrane-spanning segment; it reads ALAHFVWIAPLQVLLLMGLLW. The Extracellular portion of the chain corresponds to 218–223; sequence DLLQAS. A helical membrane pass occupies residues 224–244; that stretch reads AFCGLGFLIILSLFQARLGRM. Over 245-299 the chain is Cytoplasmic; that stretch reads MMKYKDKRAGKINERLVITSQIIENIQSVKAYCWENAMEKIIETIRETELKLTRK. The chain crosses the membrane as a helical span at residues 300–320; it reads AAYVRYFNSSAFFFSGFFVVF. At 321–340 the chain is on the extracellular side; the sequence is LSIVPHLLLDGISLRKIFTT. A helical transmembrane segment spans residues 341-359; sequence ISFSIVLRMAVTRQFPWAV. The Cytoplasmic portion of the chain corresponds to 360 to 860; the sequence is QTWYDSLGVI…YLRFLTAHKN (501 aa). ATP contacts are provided by residues Trp402, Ser435, 459–466, and Gln494; that span reads GSTGAGKT. Residues 422–647 form the ABC transporter 1 domain; that stretch reads ISNEDPSAFF…RPEFSSHLIG (226 aa). The disordered R region stretch occupies residues 652–833; sequence NAERRNSIIT…EEINEEDLKE (182 aa). The span at 750–760 shows a compositional bias: polar residues; sequence PRSNFLNTGPT. The helical transmembrane segment at 861–881 threads the bilayer; it reads FIFILVFCLVIFFVEVAASSA. The ABC transmembrane type-1 2 domain occupies 880 to 1163; the sequence is SAWLWIIKRN…ASIDVDSLMR (284 aa). The Extracellular segment spans residues 882-923; it reads WLWIIKRNAPAINMTSNENVSEVSDTLSVIVTHTSFYYVFYI. 2 N-linked (GlcNAc...) asparagine glycosylation sites follow: Asn894 and Asn900. The discontinuously helical transmembrane segment at 924–944 threads the bilayer; it reads YVGVADSLLALGIFRGLPLVH. Over 945 to 995 the chain is Cytoplasmic; sequence SLISVSKVLHKKMLHAILHAPMSTFNTMRAGRILNRFSKDTAILDDILPLS. Residues 996-1016 form a helical membrane-spanning segment; the sequence is IFDLTQLVLIVIGAITVVSLL. The Extracellular segment spans residues 1017–1018; the sequence is EP. A helical membrane pass occupies residues 1019 to 1039; the sequence is YIFLATVPVIVAFILLRSYFL. Topologically, residues 1040–1100 are cytoplasmic; that stretch reads HTSQQLKQLE…TANWFLYLST (61 aa). Residues 1101–1121 form a helical membrane-spanning segment; the sequence is LRWFQMTIEMIFVIFFIAVSF. At 1122 to 1135 the chain is on the extracellular side; sequence ISIATSGAGEEKVG. Residues 1136–1156 traverse the membrane as a helical segment; that stretch reads IVLTLAMNIMNTLQWAVNASI. Over 1157 to 1485 the chain is Cytoplasmic; the sequence is DVDSLMRSVS…TEEEVQDTRL (329 aa). One can recognise an ABC transporter 2 domain in the interval 1213-1446; the sequence is MTVKNLSANY…KSFFKQAISH (234 aa). ATP is bound by residues Tyr1222 and 1247-1254; that span reads GRTGSGKS. The segment at 1458-1485 is disordered; that stretch reads RNSSKRKSRPQISALQEETEEEVQDTRL. Over residues 1474 to 1485 the composition is skewed to acidic residues; it reads EETEEEVQDTRL. The PDZ-binding motif lies at 1483 to 1485; the sequence is TRL.

It belongs to the ABC transporter superfamily. ABCC family. CFTR transporter (TC 3.A.1.202) subfamily. As to quaternary structure, monomer; does not require oligomerization for channel activity. May form oligomers in the membrane. In terms of processing, phosphorylated; cAMP treatment promotes phosphorylation and activates the channel. Dephosphorylation decreases the ATPase activity (in vitro). Phosphorylation at PKA sites activates the channel. Phosphorylation at PKC sites enhances the response to phosphorylation by PKA.

The protein localises to the apical cell membrane. The protein resides in the early endosome membrane. It localises to the cell membrane. Its subcellular location is the recycling endosome membrane. It is found in the endoplasmic reticulum membrane. It catalyses the reaction ATP + H2O + closed Cl(-) channel = ADP + phosphate + open Cl(-) channel.. It carries out the reaction chloride(in) = chloride(out). The catalysed reaction is hydrogencarbonate(in) = hydrogencarbonate(out). The enzyme catalyses ATP + H2O = ADP + phosphate + H(+). In terms of biological role, epithelial ion channel that plays an important role in the regulation of epithelial ion and water transport and fluid homeostasis. Mediates the transport of chloride ions across the cell membrane. Possesses an intrinsic ATPase activity and utilizes ATP to gate its channel; the passive flow of anions through the channel is gated by cycles of ATP binding and hydrolysis by the ATP-binding domains. The ion channel is also permeable to HCO(3)(-); selectivity depends on the extracellular chloride concentration. Exerts its function also by modulating the activity of other ion channels and transporters. Contributes to the regulation of the pH and the ion content of the epithelial fluid layer. This is Cystic fibrosis transmembrane conductance regulator from Xenopus laevis (African clawed frog).